A 197-amino-acid polypeptide reads, in one-letter code: Putative rho GDP-dissociation inhibitor 1 (197 aa).

It belongs to the Rho GDI family. In terms of assembly, interacts with rac1A, rac1B, rac1C, racB, raCC and RacE.

Its subcellular location is the cytoplasm. In terms of biological role, regulates the GDP/GTP exchange reaction of the Rho proteins by inhibiting the dissociation of GDP from them, and the subsequent binding of GTP to them. Regulates the Rac-dependent signaling pathways controlling cytokinesis, actin reorganization and the contractile vacuole. Required for efficient accumulation of cap at the cell cortex. In Dictyostelium discoideum (Social amoeba), this protein is Putative rho GDP-dissociation inhibitor 1 (rdiA).